The chain runs to 80 residues: Acyl carrier protein (80 aa).

One can recognise a Carrier domain in the interval 2-77 (SDTLKRLQKI…DALNYIENKI (76 aa)). O-(pantetheine 4'-phosphoryl)serine is present on Ser37.

Belongs to the acyl carrier protein (ACP) family. In terms of processing, 4'-phosphopantetheine is transferred from CoA to a specific serine of apo-ACP by AcpS. This modification is essential for activity because fatty acids are bound in thioester linkage to the sulfhydryl of the prosthetic group.

The protein resides in the plastid. Its subcellular location is the chloroplast. The protein operates within lipid metabolism; fatty acid biosynthesis. Carrier of the growing fatty acid chain in fatty acid biosynthesis. The chain is Acyl carrier protein from Cylindrotheca sp. (strain N1) (Marine diatom).